Here is a 141-residue protein sequence, read N- to C-terminus: Hemoglobin subunit alpha (141 aa).

Residues 1-141 (VLSSKDKANI…VSTVLTSKYR (141 aa)) form the Globin domain. Ser-3 carries the post-translational modification Phosphoserine. 2 positions are modified to N6-succinyllysine: Lys-7 and Lys-11. Lys-16 carries the post-translational modification N6-acetyllysine; alternate. At Lys-16 the chain carries N6-succinyllysine; alternate. Residue Tyr-24 is modified to Phosphotyrosine. N6-succinyllysine is present on Lys-40. At Ser-49 the chain carries Phosphoserine. Residue His-58 participates in O2 binding. Residue His-87 participates in heme b binding. Ser-102 carries the post-translational modification Phosphoserine. Thr-108 is modified (phosphothreonine). Ser-124 is subject to Phosphoserine. A phosphothreonine mark is found at Thr-134 and Thr-137. Position 138 is a phosphoserine (Ser-138).

It belongs to the globin family. Heterotetramer of two alpha chains and two beta chains. As to expression, red blood cells.

Involved in oxygen transport from the lung to the various peripheral tissues. In terms of biological role, hemopressin acts as an antagonist peptide of the cannabinoid receptor CNR1. Hemopressin-binding efficiently blocks cannabinoid receptor CNR1 and subsequent signaling. This is Hemoglobin subunit alpha (HBA) from Vicugna pacos (Alpaca).